A 272-amino-acid polypeptide reads, in one-letter code: Probable glutathione S-transferase DHAR2, chloroplastic (272 aa).

A chloroplast-targeting transit peptide spans 1–57; it reads MAVLLRTTTSATTATSGGSSSATALLATTFRRGGRRLLLLPATRGSAPRRAALLTAR. The glutathione site is built by lysine 68 and aspartate 79. L-ascorbate-binding residues include lysine 68 and aspartate 79. The GST N-terminal domain occupies 70–148; that stretch reads SLTVPDRLGD…AIEEKYPEPS (79 aa). Residue cysteine 80 is the Nucleophile of the active site. Glutathione is bound by residues lysine 107, valine 120, serine 133, histidine 219, and tryptophan 266. The 147-residue stretch at 126–272 folds into the GST C-terminal domain; it reads EEQWVADSDV…IAGWRPKVMG (147 aa). Lysine 269 lines the L-ascorbate pocket.

It belongs to the GST superfamily. DHAR family. As to quaternary structure, monomer.

It is found in the plastid. The protein resides in the chloroplast. The catalysed reaction is RX + glutathione = an S-substituted glutathione + a halide anion + H(+). It carries out the reaction L-dehydroascorbate + 2 glutathione = glutathione disulfide + L-ascorbate. In terms of biological role, involved in ascorbate homeostasis. Maintains redox pools of ascorbate by recycling dihydroascorbate (DHA) to ascorbate. Involved in scavenging reactive oxygen species (ROS) under oxidative stresses. In Oryza sativa subsp. japonica (Rice), this protein is Probable glutathione S-transferase DHAR2, chloroplastic.